The chain runs to 137 residues: Transcription antitermination protein NusB (137 aa).

This sequence belongs to the NusB family.

In terms of biological role, involved in transcription antitermination. Required for transcription of ribosomal RNA (rRNA) genes. Binds specifically to the boxA antiterminator sequence of the ribosomal RNA (rrn) operons. The chain is Transcription antitermination protein NusB from Clavibacter michiganensis subsp. michiganensis (strain NCPPB 382).